The sequence spans 430 residues: Serine--tRNA ligase (430 aa).

Residue 231 to 233 coordinates L-serine; sequence TSE. 262-264 serves as a coordination point for ATP; that stretch reads RSE. Glu285 is an L-serine binding site. Residue 349 to 352 coordinates ATP; sequence EISS. Ser385 is an L-serine binding site.

This sequence belongs to the class-II aminoacyl-tRNA synthetase family. Type-1 seryl-tRNA synthetase subfamily. As to quaternary structure, homodimer. The tRNA molecule binds across the dimer.

Its subcellular location is the cytoplasm. The enzyme catalyses tRNA(Ser) + L-serine + ATP = L-seryl-tRNA(Ser) + AMP + diphosphate + H(+). It catalyses the reaction tRNA(Sec) + L-serine + ATP = L-seryl-tRNA(Sec) + AMP + diphosphate + H(+). Its pathway is aminoacyl-tRNA biosynthesis; selenocysteinyl-tRNA(Sec) biosynthesis; L-seryl-tRNA(Sec) from L-serine and tRNA(Sec): step 1/1. Catalyzes the attachment of serine to tRNA(Ser). Is also able to aminoacylate tRNA(Sec) with serine, to form the misacylated tRNA L-seryl-tRNA(Sec), which will be further converted into selenocysteinyl-tRNA(Sec). The polypeptide is Serine--tRNA ligase (Jannaschia sp. (strain CCS1)).